A 159-amino-acid chain; its full sequence is Cyclic pyranopterin monophosphate synthase (159 aa).

Substrate-binding positions include leucine 75–histidine 77 and methionine 113–glutamate 114. Aspartate 128 is an active-site residue.

Belongs to the MoaC family. In terms of assembly, homohexamer; trimer of dimers.

It carries out the reaction (8S)-3',8-cyclo-7,8-dihydroguanosine 5'-triphosphate = cyclic pyranopterin phosphate + diphosphate. It functions in the pathway cofactor biosynthesis; molybdopterin biosynthesis. Functionally, catalyzes the conversion of (8S)-3',8-cyclo-7,8-dihydroguanosine 5'-triphosphate to cyclic pyranopterin monophosphate (cPMP). This chain is Cyclic pyranopterin monophosphate synthase, found in Vibrio vulnificus (strain YJ016).